The sequence spans 336 residues: Phospho-N-acetylmuramoyl-pentapeptide-transferase (336 aa).

The next 10 helical transmembrane spans lie at Leu3–Ile23, Met52–Leu72, Asn79–Leu99, Leu123–Asn143, Ile144–Val164, Gly175–Ala195, Phe201–Asn221, Val227–Ala247, Leu255–Phe275, and Val315–Tyr335.

The protein belongs to the glycosyltransferase 4 family. MraY subfamily. Mg(2+) serves as cofactor.

It localises to the cell membrane. It carries out the reaction UDP-N-acetyl-alpha-D-muramoyl-L-alanyl-gamma-D-glutamyl-L-lysyl-D-alanyl-D-alanine + di-trans,octa-cis-undecaprenyl phosphate = Mur2Ac(oyl-L-Ala-gamma-D-Glu-L-Lys-D-Ala-D-Ala)-di-trans,octa-cis-undecaprenyl diphosphate + UMP. It functions in the pathway cell wall biogenesis; peptidoglycan biosynthesis. Functionally, catalyzes the initial step of the lipid cycle reactions in the biosynthesis of the cell wall peptidoglycan: transfers peptidoglycan precursor phospho-MurNAc-pentapeptide from UDP-MurNAc-pentapeptide onto the lipid carrier undecaprenyl phosphate, yielding undecaprenyl-pyrophosphoryl-MurNAc-pentapeptide, known as lipid I. The polypeptide is Phospho-N-acetylmuramoyl-pentapeptide-transferase (Streptococcus agalactiae serotype Ia (strain ATCC 27591 / A909 / CDC SS700)).